Reading from the N-terminus, the 424-residue chain is Serine--tRNA ligase (424 aa).

230–232 (TAE) serves as a coordination point for L-serine. Residue 261 to 263 (RSE) coordinates ATP. Glu-284 contacts L-serine. 348 to 351 (EISS) contributes to the ATP binding site. Ser-384 contributes to the L-serine binding site.

The protein belongs to the class-II aminoacyl-tRNA synthetase family. Type-1 seryl-tRNA synthetase subfamily. In terms of assembly, homodimer. The tRNA molecule binds across the dimer.

The protein resides in the cytoplasm. It catalyses the reaction tRNA(Ser) + L-serine + ATP = L-seryl-tRNA(Ser) + AMP + diphosphate + H(+). The enzyme catalyses tRNA(Sec) + L-serine + ATP = L-seryl-tRNA(Sec) + AMP + diphosphate + H(+). The protein operates within aminoacyl-tRNA biosynthesis; selenocysteinyl-tRNA(Sec) biosynthesis; L-seryl-tRNA(Sec) from L-serine and tRNA(Sec): step 1/1. Functionally, catalyzes the attachment of serine to tRNA(Ser). Is also able to aminoacylate tRNA(Sec) with serine, to form the misacylated tRNA L-seryl-tRNA(Sec), which will be further converted into selenocysteinyl-tRNA(Sec). The chain is Serine--tRNA ligase from Desulfatibacillum aliphaticivorans.